The chain runs to 439 residues: Secreted aspartic protease FUS4 (439 aa).

The signal sequence occupies residues 1–22 (MLTIATLHVALQVFGAFSPSHA). One can recognise a Peptidase A1 domain in the interval 49 to 434 (YLFNVTVGSP…NFEDRSFGLA (386 aa)). 2 N-linked (GlcNAc...) asparagine glycosylation sites follow: N52 and N61. The active site involves D67. N101, N107, and N123 each carry an N-linked (GlcNAc...) asparagine glycan. D296 is an active-site residue. An intrachain disulfide couples C352 to C390.

Belongs to the peptidase A1 family.

The protein resides in the secreted. Secreted aspartic protease; part of the gene cluster that mediates the biosynthesis of the mycotoxin fusarin C. Within the cluster, FUS1, FUS2, FUS8 and FUS9 are sufficient for fusarin production. The other FUS cluster members are not essential for fusarin C biosynthesis. This Gibberella moniliformis (strain M3125 / FGSC 7600) (Maize ear and stalk rot fungus) protein is Secreted aspartic protease FUS4.